The chain runs to 349 residues: S-adenosylmethionine:tRNA ribosyltransferase-isomerase (349 aa).

The protein belongs to the QueA family. As to quaternary structure, monomer.

Its subcellular location is the cytoplasm. The catalysed reaction is 7-aminomethyl-7-carbaguanosine(34) in tRNA + S-adenosyl-L-methionine = epoxyqueuosine(34) in tRNA + adenine + L-methionine + 2 H(+). It participates in tRNA modification; tRNA-queuosine biosynthesis. In terms of biological role, transfers and isomerizes the ribose moiety from AdoMet to the 7-aminomethyl group of 7-deazaguanine (preQ1-tRNA) to give epoxyqueuosine (oQ-tRNA). In Pseudomonas putida (strain W619), this protein is S-adenosylmethionine:tRNA ribosyltransferase-isomerase.